The following is a 391-amino-acid chain: MSLNPRDVVIVDFGRTPMGRSKGGMHRNTRAEDMSAHLISKLLERNDKVDPKEVEDVIWGCVNQTLEQGWNIARMASLMTPIPHTSAAQTVSRLCGSSMSALHTAAQAIMTGNGDVFVIGGVEHMGHVSMMHGVDPNPHLSLHAAKASGMMGLTAEMLGKMHGITREQQDLFGVRSHQLAHKATVEGKFKDEIIPMQGYDENGFLKVFDFDETIRPETTLEGLASLKPAFNPKGGTVTAGTSSQITDGASCMIVMSGQRAMDLGIQPLAVIRSMAVAGVDPAIMGYGPVPSTQKALKRAGLTMADIDFIELNEAFAAQALPVLKDLKVLDKMDEKVNLHGGAIALGHPFGCSGARISGTLLNVMKQNGGTLGVATMCVGLGQGITTVFERV.

The active-site Acyl-thioester intermediate is C95. Residues H347 and C377 each act as proton acceptor in the active site.

Belongs to the thiolase-like superfamily. Thiolase family. Heterotetramer of two alpha chains (FadB) and two beta chains (FadA).

The protein resides in the cytoplasm. It catalyses the reaction an acyl-CoA + acetyl-CoA = a 3-oxoacyl-CoA + CoA. The protein operates within lipid metabolism; fatty acid beta-oxidation. Catalyzes the final step of fatty acid oxidation in which acetyl-CoA is released and the CoA ester of a fatty acid two carbons shorter is formed. The chain is 3-ketoacyl-CoA thiolase from Pseudomonas putida (Arthrobacter siderocapsulatus).